A 78-amino-acid polypeptide reads, in one-letter code: D-alanyl carrier protein (78 aa).

The Carrier domain maps to 1–78 (MAFRENVLEI…MIITQLEALK (78 aa)). Ser-36 is modified (O-(pantetheine 4'-phosphoryl)serine).

The protein belongs to the DltC family. 4'-phosphopantetheine is transferred from CoA to a specific serine of apo-DCP.

Its subcellular location is the cytoplasm. It participates in cell wall biogenesis; lipoteichoic acid biosynthesis. Its function is as follows. Carrier protein involved in the D-alanylation of lipoteichoic acid (LTA). The loading of thioester-linked D-alanine onto DltC is catalyzed by D-alanine--D-alanyl carrier protein ligase DltA. The DltC-carried D-alanyl group is further transferred to cell membrane phosphatidylglycerol (PG) by forming an ester bond, probably catalyzed by DltD. D-alanylation of LTA plays an important role in modulating the properties of the cell wall in Gram-positive bacteria, influencing the net charge of the cell wall. In Listeria welshimeri serovar 6b (strain ATCC 35897 / DSM 20650 / CCUG 15529 / CIP 8149 / NCTC 11857 / SLCC 5334 / V8), this protein is D-alanyl carrier protein.